Consider the following 526-residue polypeptide: Cytochrome P450 monooxygenase SAT11 (526 aa).

Residues 18–38 traverse the membrane as a helical segment; it reads AFLLIAMLYLGYLLCICFYNI. 2 N-linked (GlcNAc...) asparagine glycosylation sites follow: Asn-125 and Asn-447. A heme-binding site is contributed by Cys-455. N-linked (GlcNAc...) asparagine glycosylation occurs at Asn-520.

It belongs to the cytochrome P450 family. It depends on heme as a cofactor.

It localises to the membrane. It functions in the pathway mycotoxin biosynthesis. Cytochrome P450 monooxygenase; part of the satratoxin SC2 cluster involved in the biosynthesis of satratoxins, trichothecene mycotoxins that are associated with human food poisonings. Satratoxins are suggested to be made by products of multiple gene clusters (SC1, SC2 and SC3) that encode 21 proteins in all, including polyketide synthases, acetyltransferases, and other enzymes expected to modify the trichothecene skeleton. SC1 encodes 10 proteins, SAT1 to SAT10. The largest are SAT8, which encodes a putative polyketide synthase (PKS) with a conventional non-reducing architecture, and SAT10, a putative protein containing four ankyrin repeats and thus may be involved in protein scaffolding. The putative short-chain reductase SAT3 may assist the PKS in some capacity. SAT6 contains a secretory lipase domain and acts probably as a trichothecene esterase. SAT5 encodes a putative acetyltransferase, and so, with SAT6, may affect endogenous protection from toxicity. The probable transcription factor SAT9 may regulate the expression of the SC1 cluster. SC2 encodes proteins SAT11 to SAT16, the largest of which encodes the putative reducing PKS SAT13. SAT11 is a cytochrome P450 monooxygenase, while SAT14 and SAT16 are probable acetyltransferases. The SC2 cluster may be regulated by the transcription factor SAT15. SC3 is a small cluster that encodes 5 proteins, SAT17 to SAT21. SAT21 is a putative MFS-type transporter which may have a role in exporting secondary metabolites. The four other proteins putatively encoded in SC3 include the taurine hydroxylase-like protein SAT17, the O-methyltransferase SAT18, the acetyltransferase SAT19, and the Cys6-type zinc finger SAT20, the latter being probably involved in regulation of SC3 expression. The sequence is that of Cytochrome P450 monooxygenase SAT11 from Stachybotrys chartarum (strain CBS 109288 / IBT 7711) (Toxic black mold).